A 76-amino-acid chain; its full sequence is Protein MATERNALLY EXPRESSED GENE 4 (76 aa).

An N-terminal signal peptide occupies residues 1-27; it reads MEYRKRVDALVFFSLLLLGYFAAHAHG. The cysteines at positions 53 and 75 are disulfide-linked.

It belongs to the MEG family. As to expression, expressed exclusively in endosperm.

This Zea mays (Maize) protein is Protein MATERNALLY EXPRESSED GENE 4 (MEG4).